The sequence spans 423 residues: Zinc transporter ZIP13 (423 aa).

Residues 1-15 (MPGCPCPGIGMAGQR) lie on the Lumenal side of the membrane. A helical membrane pass occupies residues 16–36 (LLFLAALALELLGGAGGSQQA). Residues 37 to 68 (LRSRGVAAACRLDSKESESWGALLSGERLETW) lie on the Cytoplasmic side of the membrane. A helical transmembrane segment spans residues 69–89 (ICSLLGSLMVGLSGVFPLLVI). Topologically, residues 90–108 (PLEMGTTLRSEAGARRLKQ) are lumenal. Residues 109–129 (LLSFALGGLLGNVFLHLLPEA) form a helical membrane-spanning segment. Residues 130–149 (WAYTNSASSGGERQSLQQQQ) are Cytoplasmic-facing. A helical transmembrane segment spans residues 150–170 (QLGLWVIAGFLTFLVLEKLFF). Residues 171-235 (DSKGKEETSQ…TIDNFTHGLA (65 aa)) lie on the Lumenal side of the membrane. The chain crosses the membrane as a helical span at residues 236–256 (VAASFLVSKKIGLLTTMAILL). Residues 257 to 262 (HEIPHE) carry the XEXPHE-motif motif. Topologically, residues 257–278 (HEIPHEVGDFAILLRAGFDRWS) are cytoplasmic. Residues 279–299 (AAKLQLSTALGGLLGACFAIC) form a helical membrane-spanning segment. The Lumenal segment spans residues 300–368 (AQSPKGVGTG…RAPPPATEET (69 aa)). The helical transmembrane segment at 369-389 (VAWILPFTSGGFLYIALVNVL) threads the bilayer. The Cytoplasmic portion of the chain corresponds to 390–401 (PDLLEEDDPWRS). The helical transmembrane segment at 402–422 (LQQVLLLCAGIVVMVLFSVFV) threads the bilayer. Position 423 (Glu423) is a topological domain, lumenal.

This sequence belongs to the ZIP transporter (TC 2.A.5) family. Homodimer.

The protein resides in the golgi apparatus membrane. Its subcellular location is the cytoplasmic vesicle membrane. It is found in the endoplasmic reticulum membrane. It catalyses the reaction Zn(2+)(in) = Zn(2+)(out). Its function is as follows. Functions as a zinc transporter transporting Zn(2+) from the Golgi apparatus to the cytosol and thus influences the zinc level at least in areas of the cytosol. May regulate beige adipocyte differentiation. This chain is Zinc transporter ZIP13, found in Bos taurus (Bovine).